Consider the following 396-residue polypeptide: Putative glycosyltransferase HOC1 (396 aa).

Over 2–13 (AKTTKRASSFRR) the chain is Cytoplasmic. Residues 14–34 (LMIFAIIALISLAFGVRYLFH) form a helical; Signal-anchor for type II membrane protein membrane-spanning segment. Residues 35–396 (NSNATDLQKI…WKNTPKVEQK (362 aa)) lie on the Lumenal side of the membrane. The N-linked (GlcNAc...) asparagine glycan is linked to N37.

This sequence belongs to the glycosyltransferase 32 family. In terms of assembly, component of the M-Pol II complex composed of ANP1, MNN9, MNN10, MNN11 and HOC1.

The protein localises to the golgi apparatus. The protein resides in the cis-Golgi network membrane. In terms of biological role, the M-Pol II complex possesses alpha-1,6-mannosyltransferase activity and is probably involved in the elongation of the mannan backbone of N-linked glycans on cell wall and periplasmic proteins. The sequence is that of Putative glycosyltransferase HOC1 (HOC1) from Saccharomyces cerevisiae (strain ATCC 204508 / S288c) (Baker's yeast).